Consider the following 231-residue polypeptide: Large ribosomal subunit protein uL1 (231 aa).

It belongs to the universal ribosomal protein uL1 family. In terms of assembly, part of the 50S ribosomal subunit.

Its function is as follows. Binds directly to 23S rRNA. The L1 stalk is quite mobile in the ribosome, and is involved in E site tRNA release. In terms of biological role, protein L1 is also a translational repressor protein, it controls the translation of the L11 operon by binding to its mRNA. In Herminiimonas arsenicoxydans, this protein is Large ribosomal subunit protein uL1.